The primary structure comprises 304 residues: Aspartate carbamoyltransferase catalytic subunit (304 aa).

Carbamoyl phosphate-binding residues include Arg-49 and Thr-50. Lys-77 provides a ligand contact to L-aspartate. 3 residues coordinate carbamoyl phosphate: Arg-99, His-127, and Gln-130. L-aspartate is bound by residues Arg-160 and Arg-211. 2 residues coordinate carbamoyl phosphate: Ala-252 and Pro-253.

The protein belongs to the aspartate/ornithine carbamoyltransferase superfamily. ATCase family. As to quaternary structure, heterododecamer (2C3:3R2) of six catalytic PyrB chains organized as two trimers (C3), and six regulatory PyrI chains organized as three dimers (R2).

It carries out the reaction carbamoyl phosphate + L-aspartate = N-carbamoyl-L-aspartate + phosphate + H(+). The protein operates within pyrimidine metabolism; UMP biosynthesis via de novo pathway; (S)-dihydroorotate from bicarbonate: step 2/3. Its function is as follows. Catalyzes the condensation of carbamoyl phosphate and aspartate to form carbamoyl aspartate and inorganic phosphate, the committed step in the de novo pyrimidine nucleotide biosynthesis pathway. This Bacillus cereus (strain G9842) protein is Aspartate carbamoyltransferase catalytic subunit.